Consider the following 478-residue polypeptide: Divinyl ether synthase CYP74D1 (478 aa).

Residue Cys-431 coordinates heme.

This sequence belongs to the cytochrome P450 family. 9-divinyl ether synthase subfamily. In terms of tissue distribution, expressed in roots. Detected in stems, but not in flower buds, petioles, cotyledons or leaves.

It catalyses the reaction (9S)-hydroperoxy-(10E,12Z)-octadecadienoate = colneleate + H2O. The enzyme catalyses (9S)-hydroperoxy-(10E,12Z,15Z)-octadecatrienoate = colnelenate + H2O. In terms of biological role, involved in the biosynthesis of the anti-fungal toxins colneleate and colnelenate. Can use (9S)-hydroperoxy-(10E,12Z)-octadecadienoate (9-HPOD) and (9S)-hydroperoxy-(10E,12Z,15Z)-octadecatrienoate (9-HPOT) as substrates, but has a very low activity with the corresponding 13-hydroperoxides (13-HPOD and 13-POT). In Solanum lycopersicum (Tomato), this protein is Divinyl ether synthase CYP74D1.